We begin with the raw amino-acid sequence, 1968 residues long: Signal element on autosome protein 2 (1968 aa).

The segment covering 72–88 (TSSSFSSSLATTTTTSS) has biased composition (low complexity). Disordered stretches follow at residues 72-252 (TSSS…TPTQ) and 271-364 (QVQQ…VQEQ). Residues 107-119 (SHHHPSSSHHHHP) show a composition bias toward basic residues. Composition is skewed to low complexity over residues 120–134 (GQQQ…SHLQ), 144–165 (HPYY…YGQA), 219–232 (DQPS…LPPL), and 298–338 (LSSI…SSSS). Residues 346-362 (PNASSSSLIKRQSQDVQ) are compositionally biased toward polar residues. The segment at 413–440 (YQCPNCNRNLANARNLQRHRQTCGSAQH) adopts a C2H2-type 1 zinc-finger fold. Disordered stretches follow at residues 451–499 (RSPP…LYSP) and 538–601 (WSRD…TLDP). Residues 452 to 467 (SPPPCASAPPVAPPTA) show a composition bias toward pro residues. The segment covering 472 to 482 (FQHHNSTGNLT) has biased composition (polar residues). Over residues 483 to 498 (LSYSSSSSRHQSSLYS) the composition is skewed to low complexity. Positions 570-594 (PLHHLDSFDSADHRKETPRECHEPD) are enriched in basic and acidic residues. The C2H2-type 2; degenerate zinc-finger motif lies at 651-672 (FTCEACKKSVSSERSLRRHYNT). 2 disordered regions span residues 681-712 (AASG…GPEK) and 785-854 (VTSA…TGNP). Over residues 690-702 (TTKRKPATKRPSK) the composition is skewed to basic residues. Residues 794–804 (HQLPHQQPQQQ) show a composition bias toward low complexity. Residues 812–824 (LLNEQDESADDDG) are compositionally biased toward acidic residues. Positions 827 to 851 (RSSSGTVSNSTTTTTTATTTSSKST) are enriched in low complexity. The C2H2-type 3; degenerate zinc-finger motif lies at 856–875 (FTCEHCARQLCSMSNLKRHR). 4 disordered regions span residues 882–905 (ASSS…TAPA), 975–1069 (GDAL…EHKN), 1083–1227 (RMDA…SPLD), and 1246–1273 (PGPL…SQQA). 3 stretches are compositionally biased toward low complexity: residues 981 to 1015 (QQHQ…AGRI), 1023 to 1046 (ILNQ…MLNP), and 1108 to 1131 (PQRS…YQVQ). The span at 1136–1146 (PLPPMQLPPLQ) shows a compositional bias: pro residues. A compositionally biased stretch (low complexity) spans 1147–1185 (NPHNQQQQHQMLHQSQMNYQQVQQVQQVQHVQQQQNLQN). Polar residues-rich tracts occupy residues 1201 to 1211 (APGNRSRSHSN) and 1251 to 1273 (QGQS…SQQA). A C2H2-type 4 zinc finger spans residues 1274–1297 (YICPECKKTYASRKNVKRHRMAVH). Disordered stretches follow at residues 1333 to 1478 (TPDS…ADEE), 1569 to 1608 (SVGL…QQQQ), 1624 to 1671 (HPPM…LTCS), and 1769 to 1822 (ADRQ…PSTN). Residues 1388–1403 (ERQEPPKKPVADDHKS) are compositionally biased toward basic and acidic residues. Composition is skewed to pro residues over residues 1407–1421 (PLPP…PPPY) and 1429–1445 (LNPP…PPLQ). The span at 1589–1608 (QHPQQHPQQHPQQHPQQQQQ) shows a compositional bias: low complexity. The segment covering 1624 to 1633 (HPPMPVSQQF) has biased composition (polar residues). A C2H2-type 5; degenerate zinc finger spans residues 1668-1694 (LTCSGCKKILGSDYSLRRHRAGCADVQ). A compositionally biased stretch (low complexity) spans 1800-1811 (SSSSSSSTSSAS). A C2H2-type 6 zinc finger spans residues 1826 to 1858 (HYCQFPECGKNFSSEWNLARHTRESCKMTTRAH).

In terms of tissue distribution, expressed in seam cells, intestine cells, pharyngeal muscles and nerve ring neurons.

The protein localises to the nucleus. Its subcellular location is the cytoplasm. Functionally, RNA-binding protein, which regulates the expression of proteins required to control developmental timing of events during the L2 to L3 larval stage switch. Binds to the 3'UTR of the transcript of the heterochronic protein lin-28 to post-transcriptionally negatively regulate its expression in certain tissue types in the later larval stages. During larval development, controls the timing of seam cell division and terminal differentiation into adult alae. In vitro, it can also bind to DNA through its first zinc finger. May bind directly or indirectly to the promoter of the sex-determining factor xol-1 to activate its transcription. Its activation of xol-1 transcription controls sex determination and X chromosome dosage compensation to promote male development. Through the negative regulation of lin-28 transcript, it also has a role in the fox-1-sex-1-mediated determination of sexual fate. Acts in the intestine to play a role in regulating adult lifespan. This Caenorhabditis elegans protein is Signal element on autosome protein 2.